Reading from the N-terminus, the 153-residue chain is Ribosomal RNA large subunit methyltransferase H (153 aa).

S-adenosyl-L-methionine is bound by residues Leu-70, Gly-102, and Phe-121 to Phe-126.

The protein belongs to the RNA methyltransferase RlmH family. Homodimer.

The protein resides in the cytoplasm. It catalyses the reaction pseudouridine(1915) in 23S rRNA + S-adenosyl-L-methionine = N(3)-methylpseudouridine(1915) in 23S rRNA + S-adenosyl-L-homocysteine + H(+). In terms of biological role, specifically methylates the pseudouridine at position 1915 (m3Psi1915) in 23S rRNA. This chain is Ribosomal RNA large subunit methyltransferase H, found in Desulfotalea psychrophila (strain LSv54 / DSM 12343).